A 1082-amino-acid chain; its full sequence is Error-prone DNA polymerase (1082 aa).

It belongs to the DNA polymerase type-C family. DnaE2 subfamily.

Its subcellular location is the cytoplasm. The enzyme catalyses DNA(n) + a 2'-deoxyribonucleoside 5'-triphosphate = DNA(n+1) + diphosphate. In terms of biological role, DNA polymerase involved in damage-induced mutagenesis and translesion synthesis (TLS). It is not the major replicative DNA polymerase. This chain is Error-prone DNA polymerase, found in Xanthomonas campestris pv. campestris (strain B100).